The primary structure comprises 457 residues: Protein N-terminal amidase (457 aa).

One can recognise a CN hydrolase domain in the interval 19–453 (LKVLVIQLNP…EGAILREVQF (435 aa)). The active-site Proton acceptor is E63. K136 serves as the catalytic Proton donor. C187 functions as the Nucleophile in the catalytic mechanism.

Belongs to the carbon-nitrogen hydrolase superfamily.

In terms of biological role, deamidates N-terminal Asn and Gln. Component of a targeting complex in the N-end rule pathway. The chain is Protein N-terminal amidase (NTA1) from Saccharomyces cerevisiae (strain ATCC 204508 / S288c) (Baker's yeast).